We begin with the raw amino-acid sequence, 461 residues long: Piperine synthase (461 aa).

Residues His-168 and Asp-387 each act as proton acceptor in the active site. Residues 459 to 461 (SRM) carry the Microbody targeting signal motif.

Belongs to the plant acyltransferase family. In terms of assembly, monomer. In terms of tissue distribution, confined to immature fruits perisperm. Also detectable in roots.

The protein resides in the cytoplasm. The enzyme catalyses piperidine + (E,E)-piperoyl-CoA = piperine + CoA + H(+). It carries out the reaction pyrrolidine + (E,E)-piperoyl-CoA = piperyline + CoA + H(+). It catalyses the reaction (E,E)-piperoyl-CoA + 2-methylpropan-1-amine = (E,E)-piperlonguminine + CoA + H(+). The protein operates within aromatic compound metabolism. Involved in the biosynthesis of aromatic piperamides natural products such as piperine (1-piperoyl-piperidine), the pungent principle contributing, together with several terpenoids, to the aromatic properties of black pepper fruits, and displaying numerous pharmacological activities such as antiproliferative, antitumor, antiangiogenesis, antioxidant, antidiabetic, antiobesity, cardioprotective, antimicrobial, antiaging, and immunomodulatory effects. Mediates mainly the conversion of piperidine and piperoyl-CoA to piperine. Can also use pyrrolidine and isobutylamine as acceptors and 3,4-methylenedioxycinnamoyl-CoA as an alternative CoA-donor with a lower efficiency. The polypeptide is Piperine synthase (Piper nigrum (Black pepper)).